The primary structure comprises 1691 residues: Collagen alpha-6(IV) chain (1691 aa).

The first 22 residues, 1 to 22 (MLINKLWLLLVTLCLTEELAAA), serve as a signal peptide directing secretion. The tract at residues 23-46 (GEKSYGKPCGGQDCSGSCQCFPEK) is 7S domain. The triple-helical region stretch occupies residues 47 to 1463 (GARGRPGPIG…FGMPGMPGQS (1417 aa)). Disordered stretches follow at residues 108 to 338 (IPGH…EGQK), 404 to 473 (GFPG…LGLK), 486 to 881 (GGVP…KGSP), 915 to 1099 (GIPG…KGRD), and 1185 to 1459 (THGT…MPGM). N127 carries an N-linked (GlcNAc...) asparagine glycan. Positions 185-197 (PQGAPGFPGAVGP) are enriched in low complexity. Residues 198-213 (AGPPGLQGPPGPPGPL) show a composition bias toward pro residues. 2 stretches are compositionally biased toward low complexity: residues 311–320 (QGPPGQQGKK) and 421–431 (GAAGLPGRDGL). 2 stretches are compositionally biased toward pro residues: residues 432–443 (PGPPGPPGPPSP) and 491–502 (TGPPGEPGPPGP). Over residues 503 to 512 (WGLIGLPGLK) the composition is skewed to low complexity. A Cell attachment site motif is present at residues 515–517 (RGD). Over residues 526–541 (PAGAPGLVGPLGPSGP) the composition is skewed to low complexity. Positions 560-562 (RGD) match the Cell attachment site motif. Residues 588 to 599 (GLPGDGGQGFPG) are compositionally biased toward gly residues. Composition is skewed to low complexity over residues 641–652 (LPGQQGLPGSKG), 660–703 (PGSY…GSPG), 722–735 (LPGFPGLPGKDGLP), and 802–820 (SPGTPGQVGQPGTPGSSGP). Basic residues predominate over residues 842-851 (PGKKGTRGKK). The span at 853–878 (PPGSIVKKGLPGLKGLPGNPGLVGLK) shows a compositional bias: low complexity. Residues 986 to 988 (RGD) carry the Cell attachment site motif. Residues 1055 to 1068 (SPGLPGASGLPGLK) are compositionally biased toward low complexity. A compositionally biased stretch (gly residues) spans 1210–1220 (GYPGIGIGAPG). The span at 1234–1253 (PGLQGPAGLPGAPGISLPSL) shows a compositional bias: low complexity. The segment covering 1275–1284 (PAGPPGPPGP) has biased composition (pro residues). Positions 1360–1371 (SGLQGDPGQTPT) are enriched in polar residues. Low complexity-rich tracts occupy residues 1384–1397 (LPGIDGIPGLTGDP) and 1429–1459 (ALGDPGLPGLQGPPGFEGAPGQQGPFGMPGM). In terms of domain architecture, Collagen IV NC1 spans 1467–1691 (GYTLVKHSQS…SRCQVCMKSL (225 aa)). Disulfide bonds link C1482–C1571, C1515–C1568, C1527–C1533, C1590–C1687, C1624–C1684, and C1636–C1643.

This sequence belongs to the type IV collagen family. As to quaternary structure, there are six type IV collagen isoforms, alpha 1(IV)-alpha 6(IV), each of which can form a triple helix structure with 2 other chains to generate type IV collagen network. Post-translationally, prolines at the third position of the tripeptide repeating unit (G-X-Y) are hydroxylated in some or all of the chains. Type IV collagens contain numerous cysteine residues which are involved in inter- and intramolecular disulfide bonding. 12 of these, located in the NC1 domain, are conserved in all known type IV collagens. In terms of processing, the trimeric structure of the NC1 domains is stabilized by covalent bonds between Lys and Met residues.

It is found in the secreted. Its subcellular location is the extracellular space. It localises to the extracellular matrix. The protein resides in the basement membrane. Type IV collagen is the major structural component of glomerular basement membranes (GBM), forming a 'chicken-wire' meshwork together with laminins, proteoglycans and entactin/nidogen. This Homo sapiens (Human) protein is Collagen alpha-6(IV) chain (COL4A6).